A 142-amino-acid chain; its full sequence is Small heat shock protein IbpB (142 aa).

The sHSP domain maps to 26–137 (AGESQSFPPY…AAQRIAISER (112 aa)).

The protein belongs to the small heat shock protein (HSP20) family. Homodimer. Forms homomultimers of about 100-150 subunits at optimal growth temperatures. Conformation changes to oligomers at high temperatures or high ionic concentrations. The decrease in size of the multimers is accompanied by an increase in chaperone activity.

The protein resides in the cytoplasm. Associates with aggregated proteins, together with IbpA, to stabilize and protect them from irreversible denaturation and extensive proteolysis during heat shock and oxidative stress. Aggregated proteins bound to the IbpAB complex are more efficiently refolded and reactivated by the ATP-dependent chaperone systems ClpB and DnaK/DnaJ/GrpE. Its activity is ATP-independent. The chain is Small heat shock protein IbpB from Escherichia coli O7:K1 (strain IAI39 / ExPEC).